Reading from the N-terminus, the 204-residue chain is Urease accessory protein UreG (204 aa).

Residue 12–19 coordinates GTP; sequence GPVGSGKT.

Belongs to the SIMIBI class G3E GTPase family. UreG subfamily. As to quaternary structure, homodimer. UreD, UreF and UreG form a complex that acts as a GTP-hydrolysis-dependent molecular chaperone, activating the urease apoprotein by helping to assemble the nickel containing metallocenter of UreC. The UreE protein probably delivers the nickel.

It is found in the cytoplasm. In terms of biological role, facilitates the functional incorporation of the urease nickel metallocenter. This process requires GTP hydrolysis, probably effectuated by UreG. This Stutzerimonas stutzeri (strain A1501) (Pseudomonas stutzeri) protein is Urease accessory protein UreG.